Consider the following 992-residue polypeptide: RNA-binding motif protein, X-linked-like-3 (992 aa).

Residues 8–86 (EKLFVGGLNL…KAIMVAQTIK (79 aa)) enclose the RRM domain. Disordered stretches follow at residues 91-130 (SSRW…PDDG), 144-169 (APMP…DPGD), 188-207 (PDYC…GRDH), 278-385 (DHLP…DSSS), 397-511 (EEYQ…HRYR), 562-588 (SLDA…SHRY), and 644-992 (NSGG…QSRY). Low complexity predominate over residues 284–296 (YSGGRSSSSNSYS). Residues 297 to 316 (RSDRYGEEGCYEEYRGRSPD) show a composition bias toward basic and acidic residues. Low complexity predominate over residues 318 to 334 (HSGGRNSSSNSYGQSHH). A compositionally biased stretch (basic and acidic residues) spans 335 to 371 (YGGEGRYEEYRGRYEEYRGRSHEARSGGRSTDAHSGG). Positions 454 to 471 (THSGGRSSSSNSYGQSHR) are enriched in low complexity. Over residues 472 to 488 (YGGEGHYEYRGRSHDAH) the composition is skewed to basic and acidic residues. Polar residues-rich tracts occupy residues 564 to 574 (DANSGGRSPNA), 644 to 664 (NSGG…SQSH), and 752 to 774 (DANS…SNSY). Basic and acidic residues predominate over residues 785 to 798 (HYEEYRGRSHDTHS). Residues 818–828 (GRNSFSNSYGQ) are compositionally biased toward polar residues. Composition is skewed to basic and acidic residues over residues 831-842 (HYGRGGRYEEYQ), 920-948 (SGDH…RPDR), and 981-992 (GRFERGEGQSRY).

This Pan troglodytes (Chimpanzee) protein is RNA-binding motif protein, X-linked-like-3 (RBMXL3).